We begin with the raw amino-acid sequence, 449 residues long: Phosphoglucosamine mutase (449 aa).

Serine 102 functions as the Phosphoserine intermediate in the catalytic mechanism. 4 residues coordinate Mg(2+): serine 102, aspartate 241, aspartate 243, and aspartate 245. Serine 102 carries the post-translational modification Phosphoserine.

The protein belongs to the phosphohexose mutase family. Mg(2+) is required as a cofactor. Post-translationally, activated by phosphorylation.

It catalyses the reaction alpha-D-glucosamine 1-phosphate = D-glucosamine 6-phosphate. In terms of biological role, catalyzes the conversion of glucosamine-6-phosphate to glucosamine-1-phosphate. The polypeptide is Phosphoglucosamine mutase (Roseobacter denitrificans (strain ATCC 33942 / OCh 114) (Erythrobacter sp. (strain OCh 114))).